Here is a 530-residue protein sequence, read N- to C-terminus: MVGTTLKMRGDENASENFKQVQLKKLTVPSMEATTKRAALGDLQNRGISRPIAAKDAAQKDSKDLKLTDALRNAKARVDSHWKKQPLGSTNGNGNGAVPPKVNEGGVSAFLRSNSVRNRVPTKTTVEPTKVTVKSSSSENVNEPTLKREDSNLSKKSLTKLRAALAKPVMGVSGIRREPVAVSRKEAETKKELPETKKDSLEVKKDATRMPLIRGNSAVTTTTSTMPTTMSLSSKRLAGIEDIDANDKENLVLVSEYVNDIYDYLYQVELEQPIHKDHLAGQKEVSHKMRAVLIDWINEVHLQFHLAAETFQLAVAIIDRYLQVVKDTKRTYLQLVGVTALFIATKYEELFPPAIGDFVFITDDTYTARQIRQMELQIFKAIDCNLSRPLPIHFLRRYSKAAGAEDEHHTMSKYFIELASVDYEMATYRPSEIAAASLFLSLHLLNGNHRAGTGFNDRHWTPTLTFYSRYSAAHLRPITRLIAKLARDAPQAKLKAIYNKYQGSKFQKIALRTELTGALMDSIVGQSQRK.

The interval 76–152 (ARVDSHWKKQ…EPTLKREDSN (77 aa)) is disordered. Low complexity predominate over residues 121–144 (PTKTTVEPTKVTVKSSSSENVNEP). Position 137 is a phosphoserine (Ser-137).

This sequence belongs to the cyclin family. Cyclin AB subfamily. As to quaternary structure, interacts with the protein kinase Cdk1 to form a serine/threonine kinase holoenzyme complex also known as maturation promoting factor (MPF). The cyclin subunit imparts substrate specificity to the complex.

Essential for the control of the cell cycle at the G2/M (mitosis) transition. The sequence is that of G2/mitotic-specific cyclin-B (CycB) from Drosophila melanogaster (Fruit fly).